The sequence spans 312 residues: Urease accessory protein UreD (312 aa).

The interval M1–G50 is disordered.

The protein belongs to the UreD family. As to quaternary structure, ureD, UreF and UreG form a complex that acts as a GTP-hydrolysis-dependent molecular chaperone, activating the urease apoprotein by helping to assemble the nickel containing metallocenter of UreC. The UreE protein probably delivers the nickel.

It localises to the cytoplasm. Functionally, required for maturation of urease via the functional incorporation of the urease nickel metallocenter. This is Urease accessory protein UreD from Sorangium cellulosum (strain So ce56) (Polyangium cellulosum (strain So ce56)).